Consider the following 446-residue polypeptide: Putative hydrolase YbfO (446 aa).

An N-terminal signal peptide occupies residues 1 to 28 (MKRMIVRMTLPLLIVCLAFSSFSASARA).

This Bacillus subtilis (strain 168) protein is Putative hydrolase YbfO (ybfO).